Here is a 424-residue protein sequence, read N- to C-terminus: Serine--tRNA ligase (424 aa).

Residue 230–232 participates in L-serine binding; sequence TAE. 261–263 contributes to the ATP binding site; it reads RAE. Residue E284 coordinates L-serine. An ATP-binding site is contributed by 348 to 351; the sequence is EISS. S384 is an L-serine binding site.

This sequence belongs to the class-II aminoacyl-tRNA synthetase family. Type-1 seryl-tRNA synthetase subfamily. In terms of assembly, homodimer. The tRNA molecule binds across the dimer.

The protein localises to the cytoplasm. It catalyses the reaction tRNA(Ser) + L-serine + ATP = L-seryl-tRNA(Ser) + AMP + diphosphate + H(+). The enzyme catalyses tRNA(Sec) + L-serine + ATP = L-seryl-tRNA(Sec) + AMP + diphosphate + H(+). It functions in the pathway aminoacyl-tRNA biosynthesis; selenocysteinyl-tRNA(Sec) biosynthesis; L-seryl-tRNA(Sec) from L-serine and tRNA(Sec): step 1/1. Functionally, catalyzes the attachment of serine to tRNA(Ser). Is also able to aminoacylate tRNA(Sec) with serine, to form the misacylated tRNA L-seryl-tRNA(Sec), which will be further converted into selenocysteinyl-tRNA(Sec). The sequence is that of Serine--tRNA ligase from Desulforamulus reducens (strain ATCC BAA-1160 / DSM 100696 / MI-1) (Desulfotomaculum reducens).